Here is a 152-residue protein sequence, read N- to C-terminus: Arginine repressor (152 aa).

This sequence belongs to the ArgR family.

The protein localises to the cytoplasm. It functions in the pathway amino-acid biosynthesis; L-arginine biosynthesis [regulation]. Functionally, regulates arginine biosynthesis genes. The polypeptide is Arginine repressor (Caldicellulosiruptor saccharolyticus (strain ATCC 43494 / DSM 8903 / Tp8T 6331)).